The sequence spans 405 residues: Pentatricopeptide repeat-containing protein At1g11630, mitochondrial (405 aa).

Residues 1 to 72 (MAFLFRIRTS…RSTSLSPDYH (72 aa)) constitute a mitochondrion transit peptide. PPR repeat units follow at residues 74 to 108 (DRII…QPDP), 110 to 144 (SESF…EIPR), 145 to 180 (TVKS…GIEP), 181 to 215 (DLET…WIKP), 216 to 250 (TAAS…GVHV), 251 to 285 (GVAT…RMRP), 286 to 320 (NSVT…GYKP), 321 to 355 (DSEC…NWVP), and 356 to 386 (SFSV…VKEK).

Belongs to the PPR family. P subfamily.

It localises to the mitochondrion. This is Pentatricopeptide repeat-containing protein At1g11630, mitochondrial from Arabidopsis thaliana (Mouse-ear cress).